We begin with the raw amino-acid sequence, 312 residues long: Flavonol 3-sulfotransferase (312 aa).

Position 59–64 (59–64) interacts with 3'-phosphoadenylyl sulfate; it reads KSGTTW. His-119 serves as the catalytic Proton acceptor. Residues Arg-141, Ser-149, Tyr-207, and 277 to 279 each bind 3'-phosphoadenylyl sulfate; that span reads RKG.

This sequence belongs to the sulfotransferase 1 family. In terms of tissue distribution, highest in shoot tips and lowest in mature leaves and roots.

The protein resides in the cytoplasm. In terms of biological role, sulfotransferase that utilizes 3'-phospho-5'-adenylyl sulfate (PAPS) as sulfonate donor to catalyze the sulfate conjugation of quercetin, rhamnetin and isorhamnetin but not kaempferol. O-sulfation of position 3 of flavonol. May play a role in auxin transport. The sequence is that of Flavonol 3-sulfotransferase from Flaveria bidentis (Coastal plain yellowtops).